Reading from the N-terminus, the 392-residue chain is Tryptophan synthase beta chain (392 aa).

K84 is subject to N6-(pyridoxal phosphate)lysine.

It belongs to the TrpB family. In terms of assembly, tetramer of two alpha and two beta chains. It depends on pyridoxal 5'-phosphate as a cofactor.

It carries out the reaction (1S,2R)-1-C-(indol-3-yl)glycerol 3-phosphate + L-serine = D-glyceraldehyde 3-phosphate + L-tryptophan + H2O. Its pathway is amino-acid biosynthesis; L-tryptophan biosynthesis; L-tryptophan from chorismate: step 5/5. Functionally, the beta subunit is responsible for the synthesis of L-tryptophan from indole and L-serine. This chain is Tryptophan synthase beta chain, found in Campylobacter jejuni subsp. jejuni serotype O:6 (strain 81116 / NCTC 11828).